The following is a 102-amino-acid chain: Citrate lyase acyl carrier protein (102 aa).

Position 14 is an O-(phosphoribosyl dephospho-coenzyme A)serine (serine 14).

The protein belongs to the CitD family. Oligomer with a subunit composition of (alpha,beta,gamma)6.

It is found in the cytoplasm. In terms of biological role, covalent carrier of the coenzyme of citrate lyase. This Streptococcus equi subsp. zooepidemicus (strain MGCS10565) protein is Citrate lyase acyl carrier protein.